Here is a 189-residue protein sequence, read N- to C-terminus: Elongation factor P 2 (189 aa).

Belongs to the elongation factor P family.

It localises to the cytoplasm. Its pathway is protein biosynthesis; polypeptide chain elongation. Functionally, involved in peptide bond synthesis. Stimulates efficient translation and peptide-bond synthesis on native or reconstituted 70S ribosomes in vitro. Probably functions indirectly by altering the affinity of the ribosome for aminoacyl-tRNA, thus increasing their reactivity as acceptors for peptidyl transferase. The protein is Elongation factor P 2 (efp2) of Lactobacillus johnsonii (strain CNCM I-12250 / La1 / NCC 533).